The sequence spans 158 residues: S-ribosylhomocysteine lyase (158 aa).

3 residues coordinate Fe cation: histidine 54, histidine 58, and cysteine 124.

The protein belongs to the LuxS family. As to quaternary structure, homodimer. Fe cation serves as cofactor.

It carries out the reaction S-(5-deoxy-D-ribos-5-yl)-L-homocysteine = (S)-4,5-dihydroxypentane-2,3-dione + L-homocysteine. Involved in the synthesis of autoinducer 2 (AI-2) which is secreted by bacteria and is used to communicate both the cell density and the metabolic potential of the environment. The regulation of gene expression in response to changes in cell density is called quorum sensing. Catalyzes the transformation of S-ribosylhomocysteine (RHC) to homocysteine (HC) and 4,5-dihydroxy-2,3-pentadione (DPD). This Lactobacillus johnsonii (strain CNCM I-12250 / La1 / NCC 533) protein is S-ribosylhomocysteine lyase.